Consider the following 509-residue polypeptide: Maturase K (509 aa).

The protein belongs to the intron maturase 2 family. MatK subfamily.

The protein localises to the plastid. It is found in the chloroplast. Its function is as follows. Usually encoded in the trnK tRNA gene intron. Probably assists in splicing its own and other chloroplast group II introns. The chain is Maturase K from Hottonia palustris (Water-violet).